The sequence spans 180 residues: ATP synthase subunit delta (180 aa).

The protein belongs to the ATPase delta chain family. As to quaternary structure, F-type ATPases have 2 components, F(1) - the catalytic core - and F(0) - the membrane proton channel. F(1) has five subunits: alpha(3), beta(3), gamma(1), delta(1), epsilon(1). F(0) has three main subunits: a(1), b(2) and c(10-14). The alpha and beta chains form an alternating ring which encloses part of the gamma chain. F(1) is attached to F(0) by a central stalk formed by the gamma and epsilon chains, while a peripheral stalk is formed by the delta and b chains.

Its subcellular location is the cell membrane. In terms of biological role, f(1)F(0) ATP synthase produces ATP from ADP in the presence of a proton or sodium gradient. F-type ATPases consist of two structural domains, F(1) containing the extramembraneous catalytic core and F(0) containing the membrane proton channel, linked together by a central stalk and a peripheral stalk. During catalysis, ATP synthesis in the catalytic domain of F(1) is coupled via a rotary mechanism of the central stalk subunits to proton translocation. Functionally, this protein is part of the stalk that links CF(0) to CF(1). It either transmits conformational changes from CF(0) to CF(1) or is implicated in proton conduction. The chain is ATP synthase subunit delta from Bacillus cereus (strain G9842).